The chain runs to 432 residues: Ornithine decarboxylase (432 aa).

Lys-98 carries the N6-(pyridoxal phosphate)lysine modification. Residues Ser-229, Gly-266, and Glu-296–Arg-299 contribute to the pyridoxal 5'-phosphate site. Residue Phe-341 to Asp-342 coordinates substrate. Residue Cys-377 is the Proton donor; shared with dimeric partner of the active site. Residue Asp-378 coordinates substrate. Tyr-407 serves as a coordination point for pyridoxal 5'-phosphate.

Belongs to the Orn/Lys/Arg decarboxylase class-II family. In terms of assembly, homodimer. Only the dimer is catalytically active, as the active sites are constructed of residues from both monomers. Pyridoxal 5'-phosphate is required as a cofactor.

The protein localises to the cytoplasm. It carries out the reaction L-ornithine + H(+) = putrescine + CO2. It functions in the pathway amine and polyamine biosynthesis; putrescine biosynthesis via L-ornithine pathway; putrescine from L-ornithine: step 1/1. With respect to regulation, inhibited by antizyme (AZ) OAZ1 in response to polyamine levels. AZ inhibits the assembly of the functional homodimer by binding to ODC monomers and targeting them for ubiquitin-independent proteolytic destruction by the 26S proteasome. Catalyzes the first and rate-limiting step of polyamine biosynthesis that converts ornithine into putrescine, which is the precursor for the polyamines, spermidine and spermine. Polyamines are essential for cell proliferation and are implicated in cellular processes, ranging from DNA replication to apoptosis. The chain is Ornithine decarboxylase (spe1) from Schizosaccharomyces pombe (strain 972 / ATCC 24843) (Fission yeast).